A 924-amino-acid polypeptide reads, in one-letter code: Type II inositol 3,4-bisphosphate 4-phosphatase (924 aa).

The segment covering M1–Q13 has biased composition (basic and acidic residues). Disordered regions lie at residues M1–G25, I481–Y516, and D546–P569. The 143-residue stretch at D23–L165 folds into the C2 domain.

Belongs to the inositol 3,4-bisphosphate 4-phosphatase family.

The catalysed reaction is a 1,2-diacyl-sn-glycero-3-phospho-(1D-myo-inositol-3,4-bisphosphate) + H2O = a 1,2-diacyl-sn-glycero-3-phospho-(1D-myo-inositol-3-phosphate) + phosphate. It carries out the reaction 1D-myo-inositol 1,3,4-trisphosphate + H2O = 1D-myo-inositol 1,3-bisphosphate + phosphate. It catalyses the reaction 1D-myo-inositol 3,4-bisphosphate + H2O = 1D-myo-inositol 3-phosphate + phosphate. It participates in signal transduction; phosphatidylinositol signaling pathway. Its activity is regulated as follows. Strongly inhibited by inositol hexakisphosphate. In terms of biological role, catalyzes the hydrolysis of the 4-position phosphate of phosphatidylinositol 3,4-bisphosphate, inositol 1,3,4-trisphosphate and inositol 3,4-bisphosphate. Plays a role in the late stages of macropinocytosis by dephosphorylating phosphatidylinositol 3,4-bisphosphate in membrane ruffles. Antagonizes the PI3K-AKT/PKB signaling pathway by dephosphorylating phosphoinositides and thereby modulating cell cycle progression and cell survival. In Pongo abelii (Sumatran orangutan), this protein is Type II inositol 3,4-bisphosphate 4-phosphatase (INPP4B).